Here is a 544-residue protein sequence, read N- to C-terminus: Probable protein kinase UbiB (544 aa).

The Protein kinase domain occupies 123-501; that stretch reads DFDIEPLASA…KRQQATGKFL (379 aa). ATP is bound by residues 129–137 and lysine 152; that span reads LASASIAQV. Aspartate 287 acts as the Proton acceptor in catalysis. Residues 500–520 form a helical membrane-spanning segment; that stretch reads FLFGVGATLVVCSAILVSSPY.

The protein belongs to the ABC1 family. UbiB subfamily.

Its subcellular location is the cell inner membrane. The protein operates within cofactor biosynthesis; ubiquinone biosynthesis [regulation]. Functionally, is probably a protein kinase regulator of UbiI activity which is involved in aerobic coenzyme Q (ubiquinone) biosynthesis. The chain is Probable protein kinase UbiB from Vibrio atlanticus (strain LGP32) (Vibrio splendidus (strain Mel32)).